Consider the following 227-residue polypeptide: Cytochrome c biogenesis ATP-binding export protein CcmA (227 aa).

Residues 26–227 (LAASGLGFSR…ARTLRLDARS (202 aa)) form the ABC transporter domain. Residue 58-65 (GANGSGKT) participates in ATP binding.

This sequence belongs to the ABC transporter superfamily. CcmA exporter (TC 3.A.1.107) family. In terms of assembly, the complex is composed of two ATP-binding proteins (CcmA) and two transmembrane proteins (CcmB).

The protein localises to the cell inner membrane. It carries out the reaction heme b(in) + ATP + H2O = heme b(out) + ADP + phosphate + H(+). Functionally, part of the ABC transporter complex CcmAB involved in the biogenesis of c-type cytochromes; once thought to export heme, this seems not to be the case, but its exact role is uncertain. Responsible for energy coupling to the transport system. The sequence is that of Cytochrome c biogenesis ATP-binding export protein CcmA from Cupriavidus necator (strain ATCC 17699 / DSM 428 / KCTC 22496 / NCIMB 10442 / H16 / Stanier 337) (Ralstonia eutropha).